The sequence spans 461 residues: Cysteine--tRNA ligase (461 aa).

Residue Cys29 participates in Zn(2+) binding. A 'HIGH' region motif is present at residues 31 to 41; the sequence is MTVYDFCHIGH. Zn(2+) contacts are provided by Cys210, His235, and Glu239. The short motif at 267-271 is the 'KMSKS' region element; the sequence is KMSKS. Residue Lys270 participates in ATP binding.

The protein belongs to the class-I aminoacyl-tRNA synthetase family. Monomer. Zn(2+) is required as a cofactor.

Its subcellular location is the cytoplasm. The catalysed reaction is tRNA(Cys) + L-cysteine + ATP = L-cysteinyl-tRNA(Cys) + AMP + diphosphate. The protein is Cysteine--tRNA ligase of Stutzerimonas stutzeri (strain A1501) (Pseudomonas stutzeri).